The sequence spans 346 residues: MNLQGKQVTVHDMTLRDGMHPKRHLMTLDQMKSIACGLDAAGVPLIEVTHGDGLGGSSVNYGFPAHTDEEYLGAVIPLMKQAKVSALLIPGIGTVEHLLMAKDLGVGTIRVATHCTEADVSEQHITKSRALGLDTVGFLMMAHMASPEKLVSQALLMQGYGANCIYVTDSAGYMLPDDVKARLGAVRAALKPETELGFHGHHNMAMGVANSIAAIEAGANRIDAAAAGLGAGAGNTPMEVFIAVCARMGIETGVDVFKIQDVAEDLVVPIMDHIIRIDRDSLTLGYAGVYSSFLLFAKRASVKYGVPARDILVELGRRGMVGGQEDMIEDTAMTMARERGLTLAAA.

Positions 8-260 (VTVHDMTLRD…ETGVDVFKIQ (253 aa)) constitute a Pyruvate carboxyltransferase domain. Position 16–17 (16–17 (RD)) interacts with substrate. Asp17 lines the Mn(2+) pocket. His20 functions as the Proton acceptor in the catalytic mechanism. Substrate is bound by residues Ser170 and His199. Positions 199 and 201 each coordinate Mn(2+). Tyr290 lines the substrate pocket.

It belongs to the 4-hydroxy-2-oxovalerate aldolase family.

The catalysed reaction is (S)-4-hydroxy-2-oxopentanoate = acetaldehyde + pyruvate. This is 4-hydroxy-2-oxovalerate aldolase from Polaromonas naphthalenivorans (strain CJ2).